Here is a 254-residue protein sequence, read N- to C-terminus: Protein GVQW3 (254 aa).

The chain is Protein GVQW3 from Homo sapiens (Human).